A 321-amino-acid polypeptide reads, in one-letter code: MATH domain and coiled-coil domain-containing protein At3g58410 (321 aa).

The MATH domain maps to 6-128 (GKKFAWVIKN…NGELMIVAEV (123 aa)). Positions 255 to 310 (KVDWLEKKLDQVRDKKEKERSCLAKLQETEETLLKLKQKCTELDALMDTEKAELSA) form a coiled coil.

The sequence is that of MATH domain and coiled-coil domain-containing protein At3g58410 from Arabidopsis thaliana (Mouse-ear cress).